Here is a 392-residue protein sequence, read N- to C-terminus: Phosphoglycerate kinase (392 aa).

Residues 19–21, Arg-35, 58–61, Arg-117, and Arg-150 each bind substrate; these read DFN and HMGR. Residues Lys-201, Glu-323, and 349-352 each bind ATP; that span reads GGDS.

This sequence belongs to the phosphoglycerate kinase family. In terms of assembly, monomer.

The protein resides in the cytoplasm. The catalysed reaction is (2R)-3-phosphoglycerate + ATP = (2R)-3-phospho-glyceroyl phosphate + ADP. The protein operates within carbohydrate degradation; glycolysis; pyruvate from D-glyceraldehyde 3-phosphate: step 2/5. The sequence is that of Phosphoglycerate kinase from Desulfotalea psychrophila (strain LSv54 / DSM 12343).